We begin with the raw amino-acid sequence, 49 residues long: Putative DNA-directed RNA polymerase subunit omega (49 aa).

The protein belongs to the RNA polymerase subunit omega family.

It localises to the plastid. The protein localises to the chloroplast. It catalyses the reaction RNA(n) + a ribonucleoside 5'-triphosphate = RNA(n+1) + diphosphate. In terms of biological role, may be involved in RNA polymerase activity. The polypeptide is Putative DNA-directed RNA polymerase subunit omega (rpoZ) (Cyanidioschyzon merolae (strain NIES-3377 / 10D) (Unicellular red alga)).